The chain runs to 252 residues: Zinc finger CCCH domain-containing protein 28 (252 aa).

Residues 1–21 (MSHRRDYGSDAVHVRITHDPP) are compositionally biased toward basic and acidic residues. A disordered region spans residues 1–31 (MSHRRDYGSDAVHVRITHDPPPENCFPNSGD). 2 consecutive C3H1-type zinc fingers follow at residues 71–99 (FFKTKLCFKFRAGTCPYSASSCHFAHSAE) and 143–171 (NWKTRICNKWQTTGYCPFGSHCHFAHGPS).

The polypeptide is Zinc finger CCCH domain-containing protein 28 (Arabidopsis thaliana (Mouse-ear cress)).